Consider the following 764-residue polypeptide: Aconitate hydratase (764 aa).

75–77 (DSH) contributes to the substrate binding site. [4Fe-4S] cluster-binding residues include cysteine 307, cysteine 372, and cysteine 375. Residues arginine 405, arginine 410, arginine 568, and 648–649 (SR) contribute to the substrate site.

The protein belongs to the aconitase/IPM isomerase family. It depends on [4Fe-4S] cluster as a cofactor.

The protein resides in the cytoplasm. The catalysed reaction is citrate = D-threo-isocitrate. It participates in carbohydrate metabolism; glyoxylate and dicarboxylate metabolism. Functionally, catalyzes the isomerization of citrate to isocitrate via cis-aconitate. The sequence is that of Aconitate hydratase (ACO) from Cucumis melo var. conomon (Oriental pickling melon).